A 217-amino-acid chain; its full sequence is Small ribosomal subunit protein uS5 (217 aa).

The S5 DRBM domain maps to 49 to 112 (LEEKVLDVKL…AQAKKNIIRV (64 aa)).

The protein belongs to the universal ribosomal protein uS5 family. As to quaternary structure, part of the 30S ribosomal subunit. Contacts protein S4.

Functionally, with S4 and S12 plays an important role in translational accuracy. This Methanocaldococcus jannaschii (strain ATCC 43067 / DSM 2661 / JAL-1 / JCM 10045 / NBRC 100440) (Methanococcus jannaschii) protein is Small ribosomal subunit protein uS5.